A 249-amino-acid polypeptide reads, in one-letter code: MAERGELDLTGAKQNTGVWLVKVPKYLSQQWAKASGRGEVGKLRIAKNQGRTEVSFTLNEDLANIHDIGGKPASVSAPREHPFVLQSVGGQTLTVFTESSSDKLSLEGIVVQRAECRPAASENYMKLKRLQIEESSKPVRLSQQLDKVVTTNYKPVANHQYNIEYERKKKEDGKRARADKQHVLDMLFSAFEKHQYYNLKDLVDITKQPVGYLKEILKEIGIQNVKGIHKNTWELKPEYRHYQTEEKSD.

A2 bears the N-acetylalanine mark. N6-acetyllysine occurs at positions 22, 33, and 137. S142 carries the phosphoserine modification. Positions 227 and 229 each coordinate DNA. Phosphoserine is present on S248.

Belongs to the TFIIF beta subunit family. In terms of assembly, heterodimer of an alpha and a beta subunit. Interacts with HTATSF1 and URI1. Interacts with GPBP1. Interacts with GTF2B (via N-terminus); this interaction is inhibited in presence of GTF2F1. Part of TBP-based Pol II pre-initiation complex (PIC), in which Pol II core assembles with general transcription factors and other specific initiation factors including GTF2E1, GTF2E2, GTF2F1, GTF2F2, TCEA1, ERCC2, ERCC3, GTF2H2, GTF2H3, GTF2H4, GTF2H5, GTF2A1, GTF2A2, GTF2B and TBP; this large multi-subunit PIC complex mediates DNA unwinding and targets Pol II core to the transcription start site where the first phosphodiester bond forms.

It localises to the nucleus. TFIIF is a general transcription initiation factor that binds to RNA polymerase II and helps to recruit it to the initiation complex in collaboration with TFIIB. This Mus musculus (Mouse) protein is General transcription factor IIF subunit 2 (Gtf2f2).